We begin with the raw amino-acid sequence, 154 residues long: MGLSDGEWQLVLHVWGKVEADLAGHGQDVLIRLFKAHPETLEKFDKFKHIKSEDEMKGSEDLKKHGBTVLTALGGILKKKGHHEAEIKPLAQSHATKHKIPIKYLEFISEAIIHVLZSKHPSBFGADVZGAMKRALELFRNDIAAKYKELGFQG.

The 147-residue stretch at 2 to 148 (GLSDGEWQLV…FRNDIAAKYK (147 aa)) folds into the Globin domain. The residue at position 4 (S4) is a Phosphoserine. Residue H65 coordinates nitrite. Position 65 (H65) interacts with O2. Residue T68 is modified to Phosphothreonine. H94 provides a ligand contact to heme b.

It belongs to the globin family. As to quaternary structure, monomeric.

The protein localises to the cytoplasm. Its subcellular location is the sarcoplasm. It catalyses the reaction Fe(III)-heme b-[protein] + nitric oxide + H2O = Fe(II)-heme b-[protein] + nitrite + 2 H(+). The catalysed reaction is H2O2 + AH2 = A + 2 H2O. Monomeric heme protein which primary function is to store oxygen and facilitate its diffusion within muscle tissues. Reversibly binds oxygen through a pentacoordinated heme iron and enables its timely and efficient release as needed during periods of heightened demand. Depending on the oxidative conditions of tissues and cells, and in addition to its ability to bind oxygen, it also has a nitrite reductase activity whereby it regulates the production of bioactive nitric oxide. Under stress conditions, like hypoxia and anoxia, it also protects cells against reactive oxygen species thanks to its pseudoperoxidase activity. This chain is Myoglobin (MB), found in Ondatra zibethicus (Muskrat).